The primary structure comprises 834 residues: 5-hydroxytryptamine receptor 2A (834 aa).

Topologically, residues 1-230 (MAHETSFNDA…TQLLRMAVTS (230 aa)) are extracellular. Residues 56 to 75 (TDDGQLEDTNNNNNSKRYYS) form a disordered region. 8 N-linked (GlcNAc...) asparagine glycosylation sites follow: Asn68, Asn97, Asn161, Asn175, Asn183, Asn194, Asn203, and Asn209. Residues 231-253 (VLLGLMILVTIIGNVFVIAAIIL) form a helical membrane-spanning segment. Topologically, residues 254-263 (ERNLQNVANY) are cytoplasmic. The helical transmembrane segment at 264–285 (LVASLAVADLFVACLVMPLGAV) threads the bilayer. The Extracellular segment spans residues 286 to 300 (YEISQGWILGPELCD). Cys299 and Cys378 are joined by a disulfide. A helical membrane pass occupies residues 301-322 (IWTSCDVLCCTASILHLVAIAV). Residues 323-341 (DRYWAVTNIDYIHSRTSNR) lie on the Cytoplasmic side of the membrane. The helical transmembrane segment at 342–364 (VFMMIFCVWTAAVIVSLAPQFGW) threads the bilayer. The Extracellular portion of the chain corresponds to 365-391 (KDPDYLQRIEQQKCMVSQDVSYQVFAT). Residues 392–413 (CCTFYVPLLVILALYWKIYQTA) traverse the membrane as a helical segment. Residues 414–752 (RKRIHRRRPR…AKRERKAAKT (339 aa)) lie on the Cytoplasmic side of the membrane. 5 disordered regions span residues 420-442 (RRPRPVDAAVNNNQPDGGAATDT), 460-516 (KTGS…STSG), 531-599 (QQGK…SEDQ), 617-640 (LEQVQQLQKSVKSGGGGGASTSNA), and 674-743 (STLT…TLEA). Polar residues-rich tracts occupy residues 482–502 (GNSTNTVNTVEDTEFSSSNVD) and 532–542 (QGKSTAKSSAA). The span at 551–564 (RQEDDGQRPEHGEQ) shows a compositional bias: basic and acidic residues. The span at 565-575 (EDREELEDQDE) shows a compositional bias: acidic residues. Positions 582 to 593 (TTATSATTAAGT) are enriched in low complexity. The segment covering 674–694 (STLTSCNQSHPLCGTANESPS) has biased composition (polar residues). Positions 702–723 (QPTTPQQQPHQQAHQQQQQQQQ) are enriched in low complexity. The helical transmembrane segment at 753–776 (LAIITGAFVVCWLPFFVMALTMPL) threads the bilayer. The Extracellular segment spans residues 777–785 (CAACQISDS). Residues 786 to 808 (VASLFLWLGYFNSTLNPVIYTIF) traverse the membrane as a helical segment. Topologically, residues 809–834 (SPEFRQAFKRILFGGHRPVHYRSGKL) are cytoplasmic.

This sequence belongs to the G-protein coupled receptor 1 family.

It localises to the cell membrane. Its function is as follows. This is one of the several different receptors for 5-hydroxytryptamine (serotonin), a biogenic hormone that functions as a neurotransmitter, a hormone, and a mitogen. The activity of this receptor is mediated by G proteins which inhibit adenylate cyclase. The chain is 5-hydroxytryptamine receptor 2A (5-HT1A) from Drosophila melanogaster (Fruit fly).